Consider the following 133-residue polypeptide: Large ribosomal subunit protein bL17 (133 aa).

This sequence belongs to the bacterial ribosomal protein bL17 family. Part of the 50S ribosomal subunit. Contacts protein L32.

The sequence is that of Large ribosomal subunit protein bL17 from Nitratidesulfovibrio vulgaris (strain DSM 19637 / Miyazaki F) (Desulfovibrio vulgaris).